Here is a 96-residue protein sequence, read N- to C-terminus: MTATLLTAEQLSSVAEKLPGWTLADQRLRRQWRFRNFVEAFGFMTRVALLAEAMNHHPEWSNVYATVTIELTTHDVNGLSDRDLKLAEAINLLEPG.

The protein belongs to the pterin-4-alpha-carbinolamine dehydratase family.

The enzyme catalyses (4aS,6R)-4a-hydroxy-L-erythro-5,6,7,8-tetrahydrobiopterin = (6R)-L-erythro-6,7-dihydrobiopterin + H2O. This is Putative pterin-4-alpha-carbinolamine dehydratase from Prochlorococcus marinus (strain MIT 9303).